Here is a 60-residue protein sequence, read N- to C-terminus: Waprin-Lio1 (60 aa).

An N-terminal signal peptide occupies residues 1-8 (MLLGTTSA). The 51-residue stretch at 9–59 (QVVRPGSCPNVDVPIPPLGLCRTTCQTDANCQEGRKCCKNGCGFMTCETAR) folds into the WAP domain. Disulfide bonds link cysteine 16/cysteine 46, cysteine 29/cysteine 50, cysteine 33/cysteine 45, and cysteine 39/cysteine 55.

The protein belongs to the venom waprin family. Expressed by the venom gland.

It is found in the secreted. In terms of biological role, damages membranes of susceptible bacteria. Has no hemolytic activity. Not toxic to mice. Does not inhibit the proteinases elastase and cathepsin G. This Erythrolamprus poecilogyrus (Water snake) protein is Waprin-Lio1.